We begin with the raw amino-acid sequence, 214 residues long: Rho-related GTP-binding protein RhoJ (214 aa).

Residues Cys-3 and Cys-11 are each lipidated (S-palmitoyl cysteine). Residues 31–36 (AVGKTC), 46–53 (FPEEYVPT), 75–79 (DTAGQ), 133–136 (TQID), and 177–178 (AL) contribute to the GTP site. An Effector region motif is present at residues 50–58 (YVPTVFDHY). The residue at position 211 (Cys-211) is a Cysteine methyl ester. Cys-211 is lipidated: S-farnesyl cysteine. Residues 212 to 214 (AII) constitute a propeptide, removed in mature form.

It belongs to the small GTPase superfamily. Rho family. In terms of assembly, interacts with the CRIB domains of proteins such as Pak1 and Was/Wasp. Interacts with GLUL. In terms of processing, palmitoylated; regulates localization to the plasma membrane and may be mediated by GLUL. In terms of tissue distribution, highly expressed in heart with moderate levels in lung and liver. Very low levels detected in brain, spleen, skeletal muscle, kidney and testis.

It localises to the cell membrane. Plasma membrane-associated small GTPase specifically involved in angiogenesis. Required for endothelial cell migration during vascular development via its interaction with GLUL. Elicits the formation of F-actin-rich structures, thereby regulating endothelial cell migration. The chain is Rho-related GTP-binding protein RhoJ (Rhoj) from Mus musculus (Mouse).